Consider the following 371-residue polypeptide: tRNA-specific 2-thiouridylase MnmA (371 aa).

ATP-binding positions include 13-20 (GMSGGVDS) and M39. Residues 99 to 101 (NPD) form an interaction with target base in tRNA region. C104 acts as the Nucleophile in catalysis. A disulfide bond links C104 and C200. G128 contacts ATP. Residues 150–152 (KDQ) are interaction with tRNA. Residue C200 is the Cysteine persulfide intermediate of the active site. The interaction with tRNA stretch occupies residues 309-310 (RY).

This sequence belongs to the MnmA/TRMU family.

Its subcellular location is the cytoplasm. The catalysed reaction is S-sulfanyl-L-cysteinyl-[protein] + uridine(34) in tRNA + AH2 + ATP = 2-thiouridine(34) in tRNA + L-cysteinyl-[protein] + A + AMP + diphosphate + H(+). Catalyzes the 2-thiolation of uridine at the wobble position (U34) of tRNA, leading to the formation of s(2)U34. The polypeptide is tRNA-specific 2-thiouridylase MnmA (Bacillus subtilis (strain 168)).